Consider the following 236-residue polypeptide: Apoptosis regulator Bcl-2 (236 aa).

Positions aspartate 10–tryptophan 30 match the BH4 motif. Position 69 is a phosphothreonine; by MAPK8 (threonine 69). Phosphoserine; by MAPK8 and PKC is present on serine 70. Serine 84 is modified (phosphoserine; by MAPK8). A BH3 motif is present at residues valine 90–arginine 104. Positions glutamate 133–glycine 152 match the BH1 motif. A BH2 motif is present at residues threonine 184–tyrosine 199. A helical transmembrane segment spans residues phenylalanine 209 to glycine 230.

Belongs to the Bcl-2 family. Forms homodimers, and heterodimers with BAX, BAD, BAK and Bcl-X(L). Heterodimerization with BAX requires intact BH1 and BH2 motifs, and is necessary for anti-apoptotic activity. Component of the complex, at least composed of LRPPRC, BECN1 and BCL2; the interactions prevent BECN1 from forming an autophagy-inducing complex with PIK3C3. Interacts with EI24. Also interacts with APAF1, BBC3, BCL2L1, BNIPL, MRPL41 and TP53BP2. Binding to FKBP8 seems to target BCL2 to the mitochondria and probably interferes with the binding of BCL2 to its targets. Interacts with BAG1 in an ATP-dependent manner. Interacts with RAF1 (the 'Ser-338' and 'Ser-339' phosphorylated form). Interacts (via the BH4 domain) with EGLN3; the interaction prevents the formation of the BAX-BCL2 complex and inhibits the anti-apoptotic activity of BCL2. Interacts with G0S2; this interaction also prevents the formation of the anti-apoptotic BAX-BCL2 complex. Interacts with RTL10/BOP. Interacts with the SCF(FBXO10) complex. Interacts (via the loop between motifs BH4 and BH3) with NLRP1 (via LRR repeats), but not with NLRP2, NLRP3, NLRP4, PYCARD, nor MEFV. Interacts with GIMAP3/IAN4, GIMAP4/IAN1 and GIMAP5/IAN5. Interacts with BCAP31. Interacts with IRF3; the interaction is inhibited by Sendai virus infection. Interacts with BECN1; thereby inhibiting autophagy in non-starvation conditions. Interacts with AMBRA1; thereby inhibiting autophagy. In terms of processing, phosphorylation/dephosphorylation on Ser-70 regulates anti-apoptotic activity. Growth factor-stimulated phosphorylation on Ser-70 by PKC is required for the anti-apoptosis activity and occurs during the G2/M phase of the cell cycle. In the absence of growth factors, BCL2 appears to be phosphorylated by other protein kinases such as ERKs and stress-activated kinases. Phosphorylated by MAPK8/JNK1 at Thr-69, Ser-70 and Ser-84, which stimulates starvation-induced autophagy. Dephosphorylated by protein phosphatase 2A (PP2A). Proteolytically cleaved by caspases during apoptosis. The cleaved protein, lacking the BH4 motif, has pro-apoptotic activity, causes the release of cytochrome c into the cytosol promoting further caspase activity. Post-translationally, monoubiquitinated by PRKN, leading to an increase in its stability. Ubiquitinated by SCF(FBXO10), leading to its degradation by the proteasome.

The protein resides in the mitochondrion outer membrane. Its subcellular location is the nucleus membrane. The protein localises to the endoplasmic reticulum membrane. It localises to the cytoplasm. Its function is as follows. Suppresses apoptosis in a variety of cell systems including factor-dependent lymphohematopoietic and neural cells. Regulates cell death by controlling the mitochondrial membrane permeability. Appears to function in a feedback loop system with caspases. Inhibits caspase activity either by preventing the release of cytochrome c from the mitochondria and/or by binding to the apoptosis-activating factor (APAF-1). Also acts as an inhibitor of autophagy: interacts with BECN1 and AMBRA1 during non-starvation conditions and inhibits their autophagy function. May attenuate inflammation by impairing NLRP1-inflammasome activation, hence CASP1 activation and IL1B release. This chain is Apoptosis regulator Bcl-2 (BCL2), found in Cricetulus griseus (Chinese hamster).